The sequence spans 295 residues: Pyridoxal 5'-phosphate synthase subunit PdxS (295 aa).

Asp-25 serves as a coordination point for D-ribose 5-phosphate. Lys-82 (schiff-base intermediate with D-ribose 5-phosphate) is an active-site residue. Gly-154 contributes to the D-ribose 5-phosphate binding site. Arg-166 is a binding site for D-glyceraldehyde 3-phosphate. Residues Gly-215 and 236 to 237 contribute to the D-ribose 5-phosphate site; that span reads GS.

Belongs to the PdxS/SNZ family. As to quaternary structure, in the presence of PdxT, forms a dodecamer of heterodimers.

The catalysed reaction is aldehydo-D-ribose 5-phosphate + D-glyceraldehyde 3-phosphate + L-glutamine = pyridoxal 5'-phosphate + L-glutamate + phosphate + 3 H2O + H(+). Its pathway is cofactor biosynthesis; pyridoxal 5'-phosphate biosynthesis. Catalyzes the formation of pyridoxal 5'-phosphate from ribose 5-phosphate (RBP), glyceraldehyde 3-phosphate (G3P) and ammonia. The ammonia is provided by the PdxT subunit. Can also use ribulose 5-phosphate and dihydroxyacetone phosphate as substrates, resulting from enzyme-catalyzed isomerization of RBP and G3P, respectively. This is Pyridoxal 5'-phosphate synthase subunit PdxS from Macrococcus caseolyticus (strain JCSC5402) (Macrococcoides caseolyticum).